The primary structure comprises 490 residues: MGAGGPRRGAGPPDGGWGWVVLGACFVITGFAYGFPKAVSVFFRELKRDFGAGYSDTAWVSSIMLAMLYGTGPLSSILVTRFGCRPVMLAGGLLASAGMILASFASRLLELYLTAGVLTGLGLALNFQPSLIMLGLYFERRRPLANGLAAAGSPVFLSTLSPLGQLLGERFGWRGGFLLFGGLLLHCCACGAVMRPPPGPQPRPDPAPPGGRARHRQLLDLAVCTDRTFMVYMVTKFLMALGLFVPAILLVNYAKDAGVPDAEAAFLLSIVGFVDIVARPACGALAGLGRLRPHVPYLFSLALLANGLTDLISARARSYGTLVAFCIAFGLSYGMVGALQFEVLMATVGAPRFPSALGLVLLVEAVAVLIGPPSAGRLVDALKNYEIIFYLAGSEVVLAGVFMAVTTYCCQRCSKDIPPGPSAEGGTSDTEDVEAERDSEPMPASTEEPGSLEALEVLSPRAGSPEPEEEAVPDLSHESVGGHEAHGQNA.

The Cytoplasmic segment spans residues 1–14 (MGAGGPRRGAGPPD). A helical membrane pass occupies residues 15 to 35 (GGWGWVVLGACFVITGFAYGF). At 36–58 (PKAVSVFFRELKRDFGAGYSDTA) the chain is on the extracellular side. A helical membrane pass occupies residues 59–79 (WVSSIMLAMLYGTGPLSSILV). The Cytoplasmic portion of the chain corresponds to 80-85 (TRFGCR). The chain crosses the membrane as a helical span at residues 86–106 (PVMLAGGLLASAGMILASFAS). The Extracellular portion of the chain corresponds to 107–115 (RLLELYLTA). The helical transmembrane segment at 116 to 136 (GVLTGLGLALNFQPSLIMLGL) threads the bilayer. At 137–147 (YFERRRPLANG) the chain is on the cytoplasmic side. The helical transmembrane segment at 148 to 168 (LAAAGSPVFLSTLSPLGQLLG) threads the bilayer. Residues 169 to 172 (ERFG) are Extracellular-facing. Residues 173 to 193 (WRGGFLLFGGLLLHCCACGAV) form a helical membrane-spanning segment. Residues 194–230 (MRPPPGPQPRPDPAPPGGRARHRQLLDLAVCTDRTFM) are Cytoplasmic-facing. A helical transmembrane segment spans residues 231–251 (VYMVTKFLMALGLFVPAILLV). The Extracellular portion of the chain corresponds to 252 to 257 (NYAKDA). A helical transmembrane segment spans residues 258–278 (GVPDAEAAFLLSIVGFVDIVA). Residues 279-293 (RPACGALAGLGRLRP) are Cytoplasmic-facing. Residues 294–314 (HVPYLFSLALLANGLTDLISA) form a helical membrane-spanning segment. Residues 315–318 (RARS) lie on the Extracellular side of the membrane. A helical membrane pass occupies residues 319–339 (YGTLVAFCIAFGLSYGMVGAL). Over 340-352 (QFEVLMATVGAPR) the chain is Cytoplasmic. A helical membrane pass occupies residues 353 to 373 (FPSALGLVLLVEAVAVLIGPP). The Extracellular segment spans residues 374-386 (SAGRLVDALKNYE). A helical membrane pass occupies residues 387–407 (IIFYLAGSEVVLAGVFMAVTT). The Cytoplasmic portion of the chain corresponds to 408 to 490 (YCCQRCSKDI…GGHEAHGQNA (83 aa)). The interval 419–490 (PGPSAEGGTS…GGHEAHGQNA (72 aa)) is disordered. Basolateral sorting signal regions lie at residues 426–460 (GTSD…VLSP) and 461–480 (RAGS…HESV). Basic and acidic residues predominate over residues 475–490 (LSHESVGGHEAHGQNA).

It belongs to the major facilitator superfamily. Monocarboxylate porter (TC 2.A.1.13) family. As to expression, retinal pigment epithelium.

The protein resides in the basolateral cell membrane. The catalysed reaction is (S)-lactate(in) + H(+)(in) = (S)-lactate(out) + H(+)(out). Probable retinal pigment epithelium (RPE)-specific proton-coupled L-lactate transporter. May facilitate transport of lactate and H(+) out of the retina and could therefore play a role in pH and ion homeostasis of the outer retina. This Rattus norvegicus (Rat) protein is Monocarboxylate transporter 3 (Slc16a8).